The primary structure comprises 180 residues: MKKVVLFTLLITGLSFAGEQKEANESMILFWKAVNTVILLGLVYYFGGKHIKKFLNGRRENVANMVLEAQKMREDSQKALEDAKRKLEEAKYKLEESIKISKETAEREREHAIMQANEIAERIKMQAKETINIEIRKAEAKLKKYAAEKALEVSKSLIESSINPQTSNELIKKTIKGLEA.

A helical membrane pass occupies residues 26-48 (SMILFWKAVNTVILLGLVYYFGG).

It belongs to the ATPase B chain family. As to quaternary structure, F-type ATPases have 2 components, F(1) - the catalytic core - and F(0) - the membrane proton channel. F(1) has five subunits: alpha(3), beta(3), gamma(1), delta(1), epsilon(1). F(0) has three main subunits: a(1), b(2) and c(10-14). The alpha and beta chains form an alternating ring which encloses part of the gamma chain. F(1) is attached to F(0) by a central stalk formed by the gamma and epsilon chains, while a peripheral stalk is formed by the delta and b chains.

The protein localises to the cell inner membrane. F(1)F(0) ATP synthase produces ATP from ADP in the presence of a proton or sodium gradient. F-type ATPases consist of two structural domains, F(1) containing the extramembraneous catalytic core and F(0) containing the membrane proton channel, linked together by a central stalk and a peripheral stalk. During catalysis, ATP synthesis in the catalytic domain of F(1) is coupled via a rotary mechanism of the central stalk subunits to proton translocation. In terms of biological role, component of the F(0) channel, it forms part of the peripheral stalk, linking F(1) to F(0). The polypeptide is ATP synthase subunit b (Sulfurihydrogenibium sp. (strain YO3AOP1)).